The following is a 160-amino-acid chain: Protein cornichon homolog 3 (160 aa).

Over 1-10 (MAFTFAAFCY) the chain is Cytoplasmic. A helical transmembrane segment spans residues 11-31 (MLSLVLCAALIFFAIWHIIAF). Residues 32–72 (DELRTDFKSPIDQCNPVHARERLRNIERICFLLRKLVLPEY) are Lumenal-facing. A helical membrane pass occupies residues 73 to 93 (SIHSLFCIMFLCAQEWLTLGL). The Cytoplasmic segment spans residues 94 to 138 (NVPLLFYHFWRYFHCPADSSELAYDPPVVMNADTLSYCQKEAWCK). A helical membrane pass occupies residues 139-159 (LAFYLLSFFYYLYCMIYTLVS). Position 160 (Ser-160) is a topological domain, lumenal.

The protein belongs to the cornichon family. As to quaternary structure, acts as an auxiliary subunit for AMPA-selective glutamate receptors (AMPARs). Found in a complex with GRIA1, GRIA2, GRIA3, GRIA4, CNIH2, CACNG2, CACNG3, CACNG4, CACNG5, CACNG7 and CACNG8. As to expression, expression is up-regulated in dorsolateral prefrontal cortex of patients with schizophrenia (postmortem brain study).

It is found in the postsynaptic cell membrane. Regulates the trafficking and gating properties of AMPA-selective glutamate receptors (AMPARs). Promotes their targeting to the cell membrane and synapses and modulates their gating properties by regulating their rates of activation, deactivation and desensitization. This is Protein cornichon homolog 3 (CNIH3) from Homo sapiens (Human).